We begin with the raw amino-acid sequence, 466 residues long: Sucrose-6-phosphate hydrolase (466 aa).

Substrate contacts are provided by residues 38 to 41 (LMND), glutamine 57, 100 to 101 (YS), 159 to 160 (RD), and glutamate 218. The active site involves aspartate 41.

This sequence belongs to the glycosyl hydrolase 32 family.

The protein resides in the cytoplasm. It carries out the reaction Hydrolysis of terminal non-reducing beta-D-fructofuranoside residues in beta-D-fructofuranosides.. Its pathway is glycan biosynthesis; sucrose metabolism. In terms of biological role, enables the bacterium to metabolize sucrose as a sole carbon source. The protein is Sucrose-6-phosphate hydrolase (scrB) of Salmonella typhimurium.